The sequence spans 25 residues: Glucomannokinase (25 aa).

Belongs to the ROK (NagC/XylR) family. As to quaternary structure, homodimer.

The enzyme catalyses D-glucose + ATP = D-glucose 6-phosphate + ADP + H(+). The catalysed reaction is D-mannose + ATP = D-mannose 6-phosphate + ADP + H(+). It functions in the pathway carbohydrate degradation; glycolysis; D-glyceraldehyde 3-phosphate and glycerone phosphate from D-glucose: step 1/4. It participates in carbohydrate metabolism; mannose metabolism. Its activity is regulated as follows. Competitively inhibited by 2-deoxy-glucose. Functionally, the enzyme has great affinity for glucose and mannose. The sequence is that of Glucomannokinase from Segatella bryantii (Prevotella bryantii).